The sequence spans 192 residues: PTS-dependent dihydroxyacetone kinase, ADP-binding subunit DhaL (192 aa).

Positions 5 to 189 (DTTIEWLGKF…SAYLFETLLE (185 aa)) constitute a DhaL domain. Positions 29, 34, and 36 each coordinate Mg(2+). ADP-binding positions include 37 to 40 (HGAN), 78 to 79 (AS), G115, M124, R161, and 174 to 176 (DPG).

In terms of assembly, homodimer. The dihydroxyacetone kinase complex is composed of a homodimer of DhaM, a homodimer of DhaK and the subunit DhaL. It depends on Mg(2+) as a cofactor.

It localises to the cytoplasm. The enzyme catalyses dihydroxyacetone + phosphoenolpyruvate = dihydroxyacetone phosphate + pyruvate. Its pathway is polyol metabolism; glycerol degradation. Its function is as follows. ADP-binding subunit of the dihydroxyacetone kinase, which is responsible for the phosphoenolpyruvate (PEP)-dependent phosphorylation of dihydroxyacetone. DhaL-ADP is converted to DhaL-ATP via a phosphoryl group transfer from DhaM and transmits it to dihydroxyacetone binds to DhaK. The sequence is that of PTS-dependent dihydroxyacetone kinase, ADP-binding subunit DhaL from Lactococcus lactis subsp. lactis (strain IL1403) (Streptococcus lactis).